The sequence spans 149 residues: Myoglobin (149 aa).

A2 bears the N-acetylalanine mark. The region spanning 2 to 143 (ABWDKVNSVW…ICSDIEKEYK (142 aa)) is the Globin domain. Heme b is bound at residue H89.

The protein belongs to the globin family. Monomeric.

Its subcellular location is the cytoplasm. The protein resides in the sarcoplasm. The catalysed reaction is Fe(III)-heme b-[protein] + nitric oxide + H2O = Fe(II)-heme b-[protein] + nitrite + 2 H(+). It carries out the reaction H2O2 + AH2 = A + 2 H2O. Its function is as follows. Monomeric heme protein which primary function is to store oxygen and facilitate its diffusion within muscle tissues. Reversibly binds oxygen through a pentacoordinated heme iron and enables its timely and efficient release as needed during periods of heightened demand. Depending on the oxidative conditions of tissues and cells, and in addition to its ability to bind oxygen, it also has a nitrite reductase activity whereby it regulates the production of bioactive nitric oxide. Under stress conditions, like hypoxia and anoxia, it also protects cells against reactive oxygen species thanks to its pseudoperoxidase activity. The protein is Myoglobin (mb) of Hemitriakis japanica (Japanese topeshark).